The following is a 212-amino-acid chain: Protein RER1C (212 aa).

Residue Met1 is modified to N-acetylmethionine. 4 helical membrane passes run 55-75 (TVPH…IYIV), 82-102 (GFYI…IAFL), 135-155 (EFKF…MTFF), and 157-177 (VFDV…LFFL).

The protein belongs to the RER1 family.

It is found in the membrane. Its function is as follows. Involved in the retrieval of endoplasmic reticulum membrane proteins from the early Golgi compartment. The sequence is that of Protein RER1C (RER1C) from Arabidopsis thaliana (Mouse-ear cress).